The primary structure comprises 205 residues: MAPTQNLFLVAIAFAVIFTASTVHGRHNGAEDIVHSSCEHASYPSLCVRTLSSYSGPTITNRRDLAQAAIKISLSHAQSAAKKLAVVRDSVGKKKQEKAALVDCVEMIGDSVDELSRTLGVLKHLRVSGGSAKEFRWQMSNAQTWASAALTDDDTCLDGFQGMDDGEIKTEVKQWMTKVARVTSNALYMVNQLDETRGKPHDVHL.

A signal peptide spans 1 to 25; it reads MAPTQNLFLVAIAFAVIFTASTVHG. 2 disulfides stabilise this stretch: cysteine 38-cysteine 47 and cysteine 104-cysteine 156.

This sequence belongs to the PMEI family. As to expression, expressed in apical meristem.

It localises to the secreted. The protein localises to the extracellular space. It is found in the apoplast. Functionally, pectin methylesterase (PME) inhibitor that can target PMEs (e.g. PME2 and PME3) in a pH-dependent manner, mainly in slightly acidic conditions (pH 6.3 and 5.0) but not at pH 7.5; this processus relies on changes in the protonation of amino acids involved in intermolecular and intramolecular interactions. Regulates de-methylesterification of pectins in the apical meristem and affects primordia formation and phyllotactic patterning. The chain is Pectinesterase inhibitor 3 from Arabidopsis thaliana (Mouse-ear cress).